Reading from the N-terminus, the 907-residue chain is MDTSCVHMLLSLLALLQLVAAGSSPGPDAIPRGCPSHCHCELDGRMLLRVDCSDLGLSELPSNLSVFTSYLDLSMNNISQLPASLLHRLCFLEELRLAGNALTHIPKGAFTGLHSLKVLMLQNNQLRQVPEEALQNLRSLQSLRLDANHISYVPPSCFSGLHSLRHLWLDDNALTDVPVQAFRSLSALQAMTLALNKIHHIADYAFGNLSSLVVLHLHNNRIHSLGKKCFDGLHSLETLDLNYNNLDEFPTAIKTLSNLKELGFHSNNIRSIPERAFVGNPSLITIHFYDNPIQFVGVSAFQHLPELRTLTLNGASHITEFPHLTGTATLESLTLTGAKISSLPQAVCDQLPNLQVLDLSYNLLEDLPSLSGCQKLQKIDLRHNEIYEIKGSTFQQLFNLRSLNLAWNKIAIIHPNAFSTLPSLIKLDLSSNLLSSFPVTGLHGLTHLKLTGNRALQSLIPSANFPELKIIEMPSAYQCCAFGGCENVYKISNQWNKDDGNSVDDLHKKDAGLFQVQDERDLEDFLLDFEEDLKALHSVQCSPSPGPFKPCEHLFGSWLIRIGVWTTAVLALSCNALVALTVFRTPLYISSIKLLIGVIAVVDILMGVSSAVLAAVDAFTFGRFAQHGAWWEDGIGCQIVGFLSIFASESSIFLLTLAALERGFSVKCSSKFEVKAPLFSLRAIVLLCVLLALTIATIPLLGGSKYNASPLCLPLPFGEPSTTGYMVALVLLNSLCFLIMTIAYTKLYCSLEKGELENLWDCSMVKHIALLLFANCILYCPVAFLSFSSLLNLTFISPDVIKFILLVIVPLPSCLNPLLYIVFNPHFKEDMGSLGKHTRFWMRSKHASLLSINSDDVEKRSCESTQALVSFTHASIAYDLPSTSGASPAYPMTESCHLSSVAFVPCL.

An N-terminal signal peptide occupies residues 1-21 (MDTSCVHMLLSLLALLQLVAA). Over 22–561 (GSSPGPDAIP…EHLFGSWLIR (540 aa)) the chain is Extracellular. The LRRNT domain occupies 25–66 (PGPDAIPRGCPSHCHCELDGRMLLRVDCSDLGLSELPSNLSV). 2 cysteine pairs are disulfide-bonded: Cys34–Cys40 and Cys38–Cys52. Residues Asn63 and Asn77 are each glycosylated (N-linked (GlcNAc...) asparagine). LRR repeat units lie at residues 67–88 (FTSY…LLHR), 91–112 (FLEE…AFTG), 115–136 (SLKV…ALQN), 139–160 (SLQS…CFSG), 163–184 (SLRH…AFRS), 187–208 (ALQA…AFGN), 211–232 (SLVV…CFDG), 235–256 (SLET…IKTL), 258–279 (NLKE…AFVG), 282–303 (SLIT…AFQH), 306–325 (ELRT…PHLT), 329–350 (TLES…VCDQ), 353–374 (NLQV…SGCQ), 375–396 (KLQK…TFQQ), 399–420 (NLRS…AFST), and 423–446 (SLIK…HGLT). An N-linked (GlcNAc...) asparagine glycan is attached at Asn208. Residues Cys348 and Cys373 are joined by a disulfide bond. A disulfide bond links Cys479 and Cys541. A helical transmembrane segment spans residues 562-582 (IGVWTTAVLALSCNALVALTV). Residues 583–593 (FRTPLYISSIK) lie on the Cytoplasmic side of the membrane. The helical transmembrane segment at 594–614 (LLIGVIAVVDILMGVSSAVLA) threads the bilayer. Topologically, residues 615–638 (AVDAFTFGRFAQHGAWWEDGIGCQ) are extracellular. Cys637 and Cys712 are oxidised to a cystine. The chain crosses the membrane as a helical span at residues 639-659 (IVGFLSIFASESSIFLLTLAA). Over 660–682 (LERGFSVKCSSKFEVKAPLFSLR) the chain is Cytoplasmic. The chain crosses the membrane as a helical span at residues 683-703 (AIVLLCVLLALTIATIPLLGG). Residues 704 to 723 (SKYNASPLCLPLPFGEPSTT) are Extracellular-facing. A helical transmembrane segment spans residues 724–744 (GYMVALVLLNSLCFLIMTIAY). Residues 745-767 (TKLYCSLEKGELENLWDCSMVKH) lie on the Cytoplasmic side of the membrane. Residues 768-788 (IALLLFANCILYCPVAFLSFS) traverse the membrane as a helical segment. The Extracellular segment spans residues 789 to 802 (SLLNLTFISPDVIK). The N-linked (GlcNAc...) asparagine glycan is linked to Asn792. The helical transmembrane segment at 803–823 (FILLVIVPLPSCLNPLLYIVF) threads the bilayer. The Cytoplasmic segment spans residues 824-907 (NPHFKEDMGS…LSSVAFVPCL (84 aa)).

It belongs to the G-protein coupled receptor 1 family. In terms of assembly, identified in a complex composed of RNF43, LGR5 and RSPO1. Also interacts with other R-spondin ligands, including RSPO2, RSPO3 and RSPO4. Expressed in the intestinal epithelium (at protein level). Expressed in the gonads, the adrenal gland, and in the brain. In the central nervous system expression is restricted to the olfactory bulb. In the adrenal gland detected only in the neural-crest derived chromaffin cells of the medulla, but not in the cells of the adrenal cortex. In the gonads, the expression is high in Graafian follicle, but absent from primary and secondary follicles. In the intestine, exclusively expressed in cycling crypt base columnar cells. Expressed in the lower bulge and secondary germ area of telogen hair follicles and in the lower outer root sheath of anagen hair follicle.

The protein localises to the cell membrane. The protein resides in the golgi apparatus. It is found in the trans-Golgi network membrane. Functionally, receptor for R-spondins that potentiates the canonical Wnt signaling pathway and acts as a stem cell marker of the intestinal epithelium and the hair follicle. Upon binding to R-spondins (RSPO1, RSPO2, RSPO3 or RSPO4), associates with phosphorylated LRP6 and frizzled receptors that are activated by extracellular Wnt receptors, triggering the canonical Wnt signaling pathway to increase expression of target genes. In contrast to classical G-protein coupled receptors, does not activate heterotrimeric G-proteins to transduce the signal. Involved in the development and/or maintenance of the adult intestinal stem cells during postembryonic development. This Mus musculus (Mouse) protein is Leucine-rich repeat-containing G-protein coupled receptor 5 (Lgr5).